A 550-amino-acid chain; its full sequence is Arginine--tRNA ligase (550 aa).

The 'HIGH' region signature appears at 130–140 (ANPTGPIHLGG).

Belongs to the class-I aminoacyl-tRNA synthetase family. In terms of assembly, monomer.

Its subcellular location is the cytoplasm. The enzyme catalyses tRNA(Arg) + L-arginine + ATP = L-arginyl-tRNA(Arg) + AMP + diphosphate. This is Arginine--tRNA ligase from Corynebacterium efficiens (strain DSM 44549 / YS-314 / AJ 12310 / JCM 11189 / NBRC 100395).